The sequence spans 459 residues: Beta-glucosidase (459 aa).

E171 acts as the Proton donor in catalysis. E359 functions as the Nucleophile in the catalytic mechanism.

The protein belongs to the glycosyl hydrolase 1 family.

The enzyme catalyses Hydrolysis of terminal, non-reducing beta-D-glucosyl residues with release of beta-D-glucose.. In Agrobacterium sp. (strain ATCC 21400), this protein is Beta-glucosidase (abg).